We begin with the raw amino-acid sequence, 185 residues long: HTH-type transcriptional regulator Hpr (185 aa).

One can recognise an HTH marR-type domain in the interval 13-157 (AMIFSQRIAQ…LIAILRNIYG (145 aa)). The segment at residues 63-86 (ISEIAKFGVMHVSTAFNFSKKLEE) is a DNA-binding region (H-T-H motif).

As to quaternary structure, homodimer.

Functionally, negative regulator of protease production and sporulation. The protein is HTH-type transcriptional regulator Hpr of Bacillus mycoides (strain KBAB4) (Bacillus weihenstephanensis).